Reading from the N-terminus, the 534-residue chain is Cytochrome P450 78A9 (534 aa).

Residues 26 to 46 (LALSLLVASLASLALSLFFWS) form a helical membrane-spanning segment. Residue Cys-474 coordinates heme.

This sequence belongs to the cytochrome P450 family. Requires heme as cofactor. Expressed in the funiculus of developing ovules.

It localises to the membrane. Plays a role in seed and fruit development. Functions probably in association with CYP78A6 in the regulation of seed growth. The polypeptide is Cytochrome P450 78A9 (CYP78A9) (Arabidopsis thaliana (Mouse-ear cress)).